A 261-amino-acid chain; its full sequence is MLYYPHIDPVAFRLGPLKVHWYGLMYLVGFAMAWGLALYRARDPKRHWTAQQVGDLIFYGALGLIIGGRLGYMLFYDFSNFIANPLTLFQVWRGGMSFHGGLIGVIVTTWIFSRRTHKRWMDVTDFVVPLVPLGLAAGRIGNFINGELWGRVTTVPWGMVFPNAGPLPRHPSQLYEFLLEGALLFIVIWWFSAKLRPRFAVSSLFLLCYGLFRFTAEFFRQPDPQLGFVAFGWLTRGQELSLPMIIIGGFALWWAYRHKER.

7 consecutive transmembrane segments (helical) span residues 19-39, 56-76, 92-112, 126-146, 173-193, 199-219, and 227-247; these read VHWY…LALY, LIFY…MLFY, WRGG…TWIF, FVVP…FING, QLYE…WFSA, FAVS…AEFF, and GFVA…MIII. Residue Arg139 participates in a 1,2-diacyl-sn-glycero-3-phospho-(1'-sn-glycerol) binding.

The protein belongs to the Lgt family.

It is found in the cell inner membrane. It catalyses the reaction L-cysteinyl-[prolipoprotein] + a 1,2-diacyl-sn-glycero-3-phospho-(1'-sn-glycerol) = an S-1,2-diacyl-sn-glyceryl-L-cysteinyl-[prolipoprotein] + sn-glycerol 1-phosphate + H(+). It functions in the pathway protein modification; lipoprotein biosynthesis (diacylglyceryl transfer). Its function is as follows. Catalyzes the transfer of the diacylglyceryl group from phosphatidylglycerol to the sulfhydryl group of the N-terminal cysteine of a prolipoprotein, the first step in the formation of mature lipoproteins. The sequence is that of Phosphatidylglycerol--prolipoprotein diacylglyceryl transferase from Coxiella burnetii (strain Dugway 5J108-111).